The following is a 196-amino-acid chain: ATP-dependent Clp protease proteolytic subunit (196 aa).

The active-site Nucleophile is serine 101. The active site involves histidine 126.

It belongs to the peptidase S14 family. In terms of assembly, component of the chloroplastic Clp protease core complex.

It is found in the plastid. It localises to the chloroplast stroma. The enzyme catalyses Hydrolysis of proteins to small peptides in the presence of ATP and magnesium. alpha-casein is the usual test substrate. In the absence of ATP, only oligopeptides shorter than five residues are hydrolyzed (such as succinyl-Leu-Tyr-|-NHMec, and Leu-Tyr-Leu-|-Tyr-Trp, in which cleavage of the -Tyr-|-Leu- and -Tyr-|-Trp bonds also occurs).. Cleaves peptides in various proteins in a process that requires ATP hydrolysis. Has a chymotrypsin-like activity. Plays a major role in the degradation of misfolded proteins. In Lobularia maritima (Sweet alyssum), this protein is ATP-dependent Clp protease proteolytic subunit.